A 990-amino-acid polypeptide reads, in one-letter code: Nucleotide-binding leucine-rich repeat (NLR)-like protein (990 aa).

A purine nucleoside phosphorylase domain region spans residues 22 to 304; that stretch reads GWICAIPTEL…AVAAAYAKIL (283 aa). An NB-ARC domain is found at 334-563; that stretch reads REEHLRQVLT…TISNYLEVYE (230 aa). TPR repeat units lie at residues 732-765, 774-807, 816-849, 858-891, 900-933, and 942-975; these read RDLL…KKLA, IGSM…MKQV, LGSM…RKQA, LMSM…KQQT, LASM…RKQV, and LQSM…ATLD. Residues 965 to 990 are disordered; sequence QQQQQSQATLDEGRLSKPARKRRKKK. Residues 981–990 are compositionally biased toward basic residues; the sequence is KPARKRRKKK.

The catalysed reaction is ATP + H2O = D-ribose 5-triphosphate + adenine. It catalyses the reaction dATP + H2O = 2-deoxyribose 5-triphosphate + adenine. Its function is as follows. The N-terminal purine nucleoside phosphorylase (PNP) domain cleaves the N-glycosidic bond of ATP, and to a lesser extent dATP; has very weak activity on adenosine and deoxyadenosine and no activity on (d)ADP or (d)AMP. This chain is Nucleotide-binding leucine-rich repeat (NLR)-like protein, found in Hyaloscypha variabilis (strain UAMH 11265 / GT02V1 / F) (Meliniomyces variabilis).